The primary structure comprises 224 residues: uncharacterized protein (224 aa).

D52 is an active-site residue.

Belongs to the pseudouridine synthase RluA family.

It catalyses the reaction a uridine in RNA = a pseudouridine in RNA. This is an uncharacterized protein from Haemophilus influenzae (strain ATCC 51907 / DSM 11121 / KW20 / Rd).